Reading from the N-terminus, the 414-residue chain is Esterase FrsA (414 aa).

Belongs to the FrsA family.

It catalyses the reaction a carboxylic ester + H2O = an alcohol + a carboxylate + H(+). In terms of biological role, catalyzes the hydrolysis of esters. The protein is Esterase FrsA of Shigella boydii serotype 18 (strain CDC 3083-94 / BS512).